The following is a 505-amino-acid chain: Deoxyguanosinetriphosphate triphosphohydrolase (505 aa).

In terms of domain architecture, HD spans 66-273 (RLTHSMEVQQ…MEAADDISYC (208 aa)).

It belongs to the dGTPase family. Type 1 subfamily. In terms of assembly, homotetramer. It depends on Mg(2+) as a cofactor.

It catalyses the reaction dGTP + H2O = 2'-deoxyguanosine + triphosphate + H(+). In terms of biological role, dGTPase preferentially hydrolyzes dGTP over the other canonical NTPs. This is Deoxyguanosinetriphosphate triphosphohydrolase from Escherichia coli O139:H28 (strain E24377A / ETEC).